We begin with the raw amino-acid sequence, 49 residues long: MSLVLCFLLMSLFFMYSFVLSRLWRKKIAIRLLLYIQDNVTLIVFLNKK.

The N-terminal stretch at 1-21 (MSLVLCFLLMSLFFMYSFVLS) is a signal peptide.

The chain is Protein YlcJ from Escherichia coli (strain K12).